We begin with the raw amino-acid sequence, 158 residues long: Endoribonuclease YbeY (158 aa).

Zn(2+)-binding residues include His-121, His-125, and His-131.

This sequence belongs to the endoribonuclease YbeY family. It depends on Zn(2+) as a cofactor.

It is found in the cytoplasm. Single strand-specific metallo-endoribonuclease involved in late-stage 70S ribosome quality control and in maturation of the 3' terminus of the 16S rRNA. This is Endoribonuclease YbeY from Exiguobacterium sp. (strain ATCC BAA-1283 / AT1b).